Here is a 218-residue protein sequence, read N- to C-terminus: Large ribosomal subunit protein uL3 (218 aa).

The protein belongs to the universal ribosomal protein uL3 family. As to quaternary structure, part of the 50S ribosomal subunit. Forms a cluster with proteins L14 and L19.

In terms of biological role, one of the primary rRNA binding proteins, it binds directly near the 3'-end of the 23S rRNA, where it nucleates assembly of the 50S subunit. In Corynebacterium efficiens (strain DSM 44549 / YS-314 / AJ 12310 / JCM 11189 / NBRC 100395), this protein is Large ribosomal subunit protein uL3.